The chain runs to 2655 residues: Probable polyketide synthase 42 (2655 aa).

Positions 16–445 constitute a Ketosynthase family 3 (KS3) domain; the sequence is QNGVAVIGVG…GSNCCIILSE (430 aa). Catalysis depends on for beta-ketoacyl synthase activity residues cysteine 186, histidine 325, and histidine 368. Residues 634–667 form an acyl/malonyl transferase region; the sequence is GIKSDIMVGHSFGEIACSYCSGMVDFKTLCYLTY. Residue serine 644 is the For acyl/malonyl transferase activity of the active site. An N-terminal hotdog fold region spans residues 926–1059; the sequence is HPTWKKANKN…ANYSLFKHND (134 aa). Residues 926 to 1234 enclose the PKS/mFAS DH domain; sequence HPTWKKANKN…CKSSIPIIDS (309 aa). Residue histidine 970 is the Proton acceptor; for dehydratase activity of the active site. Residues 1074 to 1234 form a C-terminal hotdog fold region; it reads NYTIISKDEL…CKSSIPIIDS (161 aa). Residue aspartate 1146 is the Proton donor; for dehydratase activity of the active site. The interval 1700 to 1719 is disordered; that stretch reads YNNNNNNNNNNNNNNNNNNN. The Carrier domain maps to 2517 to 2594; it reads NENNNIGDLL…TTIEIIIKGY (78 aa). The residue at position 2554 (serine 2554) is an O-(pantetheine 4'-phosphoryl)serine. The disordered stretch occupies residues 2612–2655; that stretch reads SVVQKETIKDNNENKDDIKIDMDDKKENLKGKKENIDDKKENNN. The segment covering 2617 to 2655 has biased composition (basic and acidic residues); sequence ETIKDNNENKDDIKIDMDDKKENLKGKKENIDDKKENNN. Residues 2618-2655 are a coiled coil; sequence TIKDNNENKDDIKIDMDDKKENLKGKKENIDDKKENNN.

Requires pantetheine 4'-phosphate as cofactor.

Probable polyketide synthase. The protein is Probable polyketide synthase 42 (pks42) of Dictyostelium discoideum (Social amoeba).